A 56-amino-acid chain; its full sequence is Large ribosomal subunit protein eL37 (56 aa).

The Zn(2+) site is built by Cys19, Cys22, Cys34, and Cys37. The C4-type zinc-finger motif lies at 19-37 (CRRCGSVSLNIHTKQCTSC).

This sequence belongs to the eukaryotic ribosomal protein eL37 family. The cofactor is Zn(2+).

Binds to the 23S rRNA. The sequence is that of Large ribosomal subunit protein eL37 from Methanococcoides burtonii (strain DSM 6242 / NBRC 107633 / OCM 468 / ACE-M).